We begin with the raw amino-acid sequence, 227 residues long: Cytochrome c oxidase subunit 2 (227 aa).

Residues Met1 to Ser14 lie on the Mitochondrial intermembrane side of the membrane. A helical membrane pass occupies residues Pro15–Met45. At Leu46–Gln59 the chain is on the mitochondrial matrix side. Residues Glu60–Met87 form a helical membrane-spanning segment. Over Asp88–Leu227 the chain is Mitochondrial intermembrane. Cu cation-binding residues include His161, Cys196, Glu198, Cys200, His204, and Met207. Glu198 is a binding site for Mg(2+). Tyr218 is subject to Phosphotyrosine.

Belongs to the cytochrome c oxidase subunit 2 family. Component of the cytochrome c oxidase (complex IV, CIV), a multisubunit enzyme composed of 14 subunits. The complex is composed of a catalytic core of 3 subunits MT-CO1, MT-CO2 and MT-CO3, encoded in the mitochondrial DNA, and 11 supernumerary subunits COX4I, COX5A, COX5B, COX6A, COX6B, COX6C, COX7A, COX7B, COX7C, COX8 and NDUFA4, which are encoded in the nuclear genome. The complex exists as a monomer or a dimer and forms supercomplexes (SCs) in the inner mitochondrial membrane with NADH-ubiquinone oxidoreductase (complex I, CI) and ubiquinol-cytochrome c oxidoreductase (cytochrome b-c1 complex, complex III, CIII), resulting in different assemblies (supercomplex SCI(1)III(2)IV(1) and megacomplex MCI(2)III(2)IV(2)). Found in a complex with TMEM177, COA6, COX18, COX20, SCO1 and SCO2. Interacts with TMEM177 in a COX20-dependent manner. Interacts with COX20. Interacts with COX16. The cofactor is Cu cation.

It localises to the mitochondrion inner membrane. It catalyses the reaction 4 Fe(II)-[cytochrome c] + O2 + 8 H(+)(in) = 4 Fe(III)-[cytochrome c] + 2 H2O + 4 H(+)(out). Functionally, component of the cytochrome c oxidase, the last enzyme in the mitochondrial electron transport chain which drives oxidative phosphorylation. The respiratory chain contains 3 multisubunit complexes succinate dehydrogenase (complex II, CII), ubiquinol-cytochrome c oxidoreductase (cytochrome b-c1 complex, complex III, CIII) and cytochrome c oxidase (complex IV, CIV), that cooperate to transfer electrons derived from NADH and succinate to molecular oxygen, creating an electrochemical gradient over the inner membrane that drives transmembrane transport and the ATP synthase. Cytochrome c oxidase is the component of the respiratory chain that catalyzes the reduction of oxygen to water. Electrons originating from reduced cytochrome c in the intermembrane space (IMS) are transferred via the dinuclear copper A center (CU(A)) of subunit 2 and heme A of subunit 1 to the active site in subunit 1, a binuclear center (BNC) formed by heme A3 and copper B (CU(B)). The BNC reduces molecular oxygen to 2 water molecules using 4 electrons from cytochrome c in the IMS and 4 protons from the mitochondrial matrix. This chain is Cytochrome c oxidase subunit 2 (MT-CO2), found in Speothos venaticus (Bush dog).